Consider the following 725-residue polypeptide: N-alpha-acetyltransferase 35, NatC auxiliary subunit (725 aa).

Residues 548 to 573 (ERIMEEQQKGRSSKKTKKKKKVRPLS) are disordered. Residues 558-571 (RSSKKTKKKKKVRP) show a composition bias toward basic residues.

This sequence belongs to the MAK10 family. Component of the N-terminal acetyltransferase C (NatC) complex, which is composed of NAA35, NAA38 and NAA30. As to expression, expressed in primary spermatocytes, basal epidermis, interstitial fibroblasts of skeletal muscle, and intestinal crypts.

The protein resides in the cytoplasm. Its function is as follows. Auxillary component of the N-terminal acetyltransferase C (NatC) complex which catalyzes acetylation of N-terminal methionine residues. N-terminal acetylation protects proteins from ubiquitination and degradation by the N-end rule pathway. Involved in regulation of apoptosis and proliferation of smooth muscle cells. The polypeptide is N-alpha-acetyltransferase 35, NatC auxiliary subunit (Naa35) (Rattus norvegicus (Rat)).